Consider the following 241-residue polypeptide: CRISPR-associated endoribonuclease Cas6 2 (241 aa).

Tyr-28 functions as the Proton acceptor in the catalytic mechanism. The active-site Proton donor is the His-40.

It belongs to the CRISPR-associated protein Cas6/Cse3/CasE family.

In terms of biological role, CRISPR (clustered regularly interspaced short palindromic repeat) is an adaptive immune system that provides protection against mobile genetic elements (viruses, transposable elements and conjugative plasmids). CRISPR clusters contain sequences complementary to antecedent mobile elements and target invading nucleic acids. CRISPR clusters are transcribed and processed into CRISPR RNA (crRNA). This protein processes pre-crRNA into individual crRNA units. This chain is CRISPR-associated endoribonuclease Cas6 2 (cas6b), found in Methanocaldococcus jannaschii (strain ATCC 43067 / DSM 2661 / JAL-1 / JCM 10045 / NBRC 100440) (Methanococcus jannaschii).